The primary structure comprises 411 residues: Phosphoribosylaminoimidazole-succinocarboxamide synthase, chloroplastic (411 aa).

A chloroplast-targeting transit peptide spans 1 to 53 (MAQCVRSTLNPVRTPQSFTRKAYVKSPAFASVSFLRAVPEFNKYPKPCSLVMS).

Belongs to the SAICAR synthetase family.

The protein resides in the plastid. It localises to the chloroplast. The enzyme catalyses 5-amino-1-(5-phospho-D-ribosyl)imidazole-4-carboxylate + L-aspartate + ATP = (2S)-2-[5-amino-1-(5-phospho-beta-D-ribosyl)imidazole-4-carboxamido]succinate + ADP + phosphate + 2 H(+). It functions in the pathway purine metabolism; IMP biosynthesis via de novo pathway; 5-amino-1-(5-phospho-D-ribosyl)imidazole-4-carboxamide from 5-amino-1-(5-phospho-D-ribosyl)imidazole-4-carboxylate: step 1/2. The polypeptide is Phosphoribosylaminoimidazole-succinocarboxamide synthase, chloroplastic (PUR7) (Arabidopsis thaliana (Mouse-ear cress)).